The chain runs to 298 residues: Cyclin-dependent kinase 2 (298 aa).

Met-1 carries the N-acetylmethionine modification. A Protein kinase domain is found at Phe-4–Phe-286. Position 6 is an N6-acetyllysine (Lys-6). Ile-10–Val-18 contacts ATP. Thr-14 carries the post-translational modification Phosphothreonine. Phosphotyrosine; by WEE1 is present on Tyr-15. At Tyr-19 the chain carries Phosphotyrosine. ATP is bound by residues Lys-33, Glu-81–Leu-83, and Asp-86. Residue Asp-127 is the Proton acceptor of the active site. ATP contacts are provided by residues Lys-129 to Asn-132 and Asp-145. Asn-132 and Asp-145 together coordinate Mg(2+). A Phosphothreonine; by CAK and CCRK modification is found at Thr-160.

The protein belongs to the protein kinase superfamily. CMGC Ser/Thr protein kinase family. CDC2/CDKX subfamily. As to quaternary structure, found in a complex with CABLES1, CCNA1 and CCNE1. Interacts with CABLES1. Interacts with UHRF2. Part of a complex consisting of UHRF2, CDK2 and CCNE1. Interacts with the Speedy/Ringo proteins SPDYA and SPDYC. Interaction with SPDYA promotes kinase activation via a conformation change that alleviates obstruction of the substrate-binding cleft by the T-loop. Found in a complex with both SPDYA and CDKN1B/KIP1. Binds to RB1 and CDK7. Binding to CDKN1A (p21) leads to CDK2/cyclin E inactivation at the G1-S phase DNA damage checkpoint, thereby arresting cells at the G1-S transition during DNA repair. Associated with PTPN6 and beta-catenin/CTNNB1. Interacts with CACUL1. May interact with CEP63. Interacts with ANKRD17. Interacts with CEBPA (when phosphorylated). Forms a ternary complex with CCNA2 and CDKN1B; CDKN1B inhibits the kinase activity of CDK2 through conformational rearrangements. Interacts with cyclins A, B1, B3, D, or E. Interacts with CDK2AP2. Mg(2+) serves as cofactor. Phosphorylated at Thr-160 by CDK7 in a CAK complex. Phosphorylation at Thr-160 promotes kinase activity, whereas phosphorylation at Tyr-15 by WEE1 reduces slightly kinase activity. Phosphorylated on Thr-14 and Tyr-15 during S and G2 phases before being dephosphorylated by CDC25A. In terms of processing, nitrosylated after treatment with nitric oxide (DETA-NO).

It localises to the cytoplasm. It is found in the cytoskeleton. Its subcellular location is the microtubule organizing center. The protein localises to the centrosome. The protein resides in the nucleus. It localises to the cajal body. It is found in the endosome. The catalysed reaction is L-seryl-[protein] + ATP = O-phospho-L-seryl-[protein] + ADP + H(+). It catalyses the reaction L-threonyl-[protein] + ATP = O-phospho-L-threonyl-[protein] + ADP + H(+). Its activity is regulated as follows. Phosphorylation at Thr-14 or Tyr-15 inactivates the enzyme, while phosphorylation at Thr-160 activates it. Stimulated by MYC. Inactivated by CDKN1A (p21). Serine/threonine-protein kinase involved in the control of the cell cycle; essential for meiosis, but dispensable for mitosis. Phosphorylates CABLES1, CTNNB1, CDK2AP2, ERCC6, NBN, USP37, p53/TP53, NPM1, CDK7, RB1, BRCA2, MYC, NPAT, EZH2. Triggers duplication of centrosomes and DNA. Acts at the G1-S transition to promote the E2F transcriptional program and the initiation of DNA synthesis, and modulates G2 progression; controls the timing of entry into mitosis/meiosis by controlling the subsequent activation of cyclin B/CDK1 by phosphorylation, and coordinates the activation of cyclin B/CDK1 at the centrosome and in the nucleus. Crucial role in orchestrating a fine balance between cellular proliferation, cell death, and DNA repair in embryonic stem cells (ESCs). Activity of CDK2 is maximal during S phase and G2; activated by interaction with cyclin E during the early stages of DNA synthesis to permit G1-S transition, and subsequently activated by cyclin A2 (cyclin A1 in germ cells) during the late stages of DNA replication to drive the transition from S phase to mitosis, the G2 phase. EZH2 phosphorylation promotes H3K27me3 maintenance and epigenetic gene silencing. Cyclin E/CDK2 prevents oxidative stress-mediated Ras-induced senescence by phosphorylating MYC. Involved in G1-S phase DNA damage checkpoint that prevents cells with damaged DNA from initiating mitosis; regulates homologous recombination-dependent repair by phosphorylating BRCA2, this phosphorylation is low in S phase when recombination is active, but increases as cells progress towards mitosis. In response to DNA damage, double-strand break repair by homologous recombination a reduction of CDK2-mediated BRCA2 phosphorylation. Involved in regulation of telomere repair by mediating phosphorylation of NBN. Phosphorylation of RB1 disturbs its interaction with E2F1. NPM1 phosphorylation by cyclin E/CDK2 promotes its dissociation from unduplicated centrosomes, thus initiating centrosome duplication. Cyclin E/CDK2-mediated phosphorylation of NPAT at G1-S transition and until prophase stimulates the NPAT-mediated activation of histone gene transcription during S phase. Required for vitamin D-mediated growth inhibition by being itself inactivated. Involved in the nitric oxide- (NO) mediated signaling in a nitrosylation/activation-dependent manner. USP37 is activated by phosphorylation and thus triggers G1-S transition. CTNNB1 phosphorylation regulates insulin internalization. Phosphorylates FOXP3 and negatively regulates its transcriptional activity and protein stability. Phosphorylates ERCC6 which is essential for its chromatin remodeling activity at DNA double-strand breaks. Acts as a regulator of the phosphatidylinositol 3-kinase/protein kinase B signal transduction by mediating phosphorylation of the C-terminus of protein kinase B (PKB/AKT1 and PKB/AKT2), promoting its activation. This Bos taurus (Bovine) protein is Cyclin-dependent kinase 2 (CDK2).